Consider the following 335-residue polypeptide: Anthranilate phosphoribosyltransferase (335 aa).

5-phospho-alpha-D-ribose 1-diphosphate contacts are provided by residues glycine 79, 82–83 (GD), serine 87, 89–92 (NIST), 107–115 (KHGNRSITS), and serine 119. Glycine 79 contacts anthranilate. A Mg(2+)-binding site is contributed by serine 91. Residue asparagine 110 participates in anthranilate binding. Arginine 165 is a binding site for anthranilate. Residues aspartate 224 and glutamate 225 each coordinate Mg(2+).

It belongs to the anthranilate phosphoribosyltransferase family. In terms of assembly, homodimer. Requires Mg(2+) as cofactor.

It carries out the reaction N-(5-phospho-beta-D-ribosyl)anthranilate + diphosphate = 5-phospho-alpha-D-ribose 1-diphosphate + anthranilate. It participates in amino-acid biosynthesis; L-tryptophan biosynthesis; L-tryptophan from chorismate: step 2/5. Its function is as follows. Catalyzes the transfer of the phosphoribosyl group of 5-phosphorylribose-1-pyrophosphate (PRPP) to anthranilate to yield N-(5'-phosphoribosyl)-anthranilate (PRA). This chain is Anthranilate phosphoribosyltransferase, found in Lactococcus lactis subsp. lactis (strain IL1403) (Streptococcus lactis).